A 364-amino-acid polypeptide reads, in one-letter code: Guanine nucleotide-binding protein alpha-8 subunit (364 aa).

Gly2 is lipidated: N-myristoyl glycine. A lipid anchor (S-palmitoyl cysteine) is attached at Cys5. The G-alpha domain maps to 38-364 (KILKLLILGP…QHTMQKVGIQ (327 aa)). The interval 41 to 54 (KLLILGPGESGKST) is G1 motif. GTP contacts are provided by residues 46–53 (GPGESGKS), 186–192 (LKSRVPT), 211–215 (DVGGQ), 280–283 (NKID), and Ala336. 2 residues coordinate Mg(2+): Ser53 and Thr192. A G2 motif region spans residues 184 to 192 (DILKSRVPT). The G3 motif stretch occupies residues 207-216 (FKIFDVGGQR). The tract at residues 276–283 (ILFLNKID) is G4 motif. Residues 334 to 339 (TCATDT) form a G5 motif region.

The protein belongs to the G-alpha family. As to quaternary structure, g proteins are composed of 3 units; alpha, beta and gamma. The alpha chain contains the guanine nucleotide binding site.

Guanine nucleotide-binding proteins (G proteins) are involved as modulators or transducers in various transmembrane signaling systems. In Caenorhabditis briggsae, this protein is Guanine nucleotide-binding protein alpha-8 subunit (gpa-8).